The sequence spans 854 residues: Rod cGMP-specific 3',5'-cyclic phosphodiesterase subunit beta (854 aa).

An N-acetylserine modification is found at serine 2. GAF domains are found at residues 71–220 and 252–429; these read NMER…TLYL and DIER…GWSV. Residues 481-814 enclose the PDEase domain; that stretch reads DEDELGEILK…KEWKALADEY (334 aa). Catalysis depends on histidine 557, which acts as the Proton donor. A divalent metal cation-binding residues include histidine 561, histidine 597, aspartate 598, and aspartate 718. A lipid anchor (S-geranylgeranyl cysteine) is attached at cysteine 851. Residues 852 to 854 constitute a propeptide, removed in mature form; it reads CIL.

The protein belongs to the cyclic nucleotide phosphodiesterase family. Oligomer composed of two catalytic chains (alpha and beta), an inhibitory chain (gamma) and the delta chain. Requires a divalent metal cation as cofactor.

Its subcellular location is the membrane. The protein localises to the cell projection. It localises to the cilium. The protein resides in the photoreceptor outer segment. The enzyme catalyses 3',5'-cyclic GMP + H2O = GMP + H(+). Rod-specific cGMP phosphodiesterase that catalyzes the hydrolysis of 3',5'-cyclic GMP. Necessary for the formation of a functional phosphodiesterase holoenzyme. Involved in retinal circadian rhythm photoentrainment via modulation of UVA and orange light-induced phase-shift of the retina clock. May participate in processes of transmission and amplification of the visual signal. The protein is Rod cGMP-specific 3',5'-cyclic phosphodiesterase subunit beta of Homo sapiens (Human).